We begin with the raw amino-acid sequence, 194 residues long: Holliday junction branch migration complex subunit RuvA (194 aa).

The segment at 1-64 (MISRLTGKLV…EDAHLLFGFA (64 aa)) is domain I. The tract at residues 65–143 (TAEERKTFRQ…AHAVTDGLFA (79 aa)) is domain II. The segment at 144 to 147 (AAPA) is flexible linker. Residues 147-194 (AADETEDIVGTLLALGYSEREAKAAVKGVPEGTDVGEGVRLALKNLLK) form a domain III region.

The protein belongs to the RuvA family. Homotetramer. Forms an RuvA(8)-RuvB(12)-Holliday junction (HJ) complex. HJ DNA is sandwiched between 2 RuvA tetramers; dsDNA enters through RuvA and exits via RuvB. An RuvB hexamer assembles on each DNA strand where it exits the tetramer. Each RuvB hexamer is contacted by two RuvA subunits (via domain III) on 2 adjacent RuvB subunits; this complex drives branch migration. In the full resolvosome a probable DNA-RuvA(4)-RuvB(12)-RuvC(2) complex forms which resolves the HJ.

It is found in the cytoplasm. The RuvA-RuvB-RuvC complex processes Holliday junction (HJ) DNA during genetic recombination and DNA repair, while the RuvA-RuvB complex plays an important role in the rescue of blocked DNA replication forks via replication fork reversal (RFR). RuvA specifically binds to HJ cruciform DNA, conferring on it an open structure. The RuvB hexamer acts as an ATP-dependent pump, pulling dsDNA into and through the RuvAB complex. HJ branch migration allows RuvC to scan DNA until it finds its consensus sequence, where it cleaves and resolves the cruciform DNA. The protein is Holliday junction branch migration complex subunit RuvA of Neisseria meningitidis serogroup A / serotype 4A (strain DSM 15465 / Z2491).